Consider the following 142-residue polypeptide: UPF0336 protein PPA1896 (142 aa).

Belongs to the UPF0336 family.

The protein is UPF0336 protein PPA1896 of Cutibacterium acnes (strain DSM 16379 / KPA171202) (Propionibacterium acnes).